A 78-amino-acid polypeptide reads, in one-letter code: Ferredoxin oxidoreductase 2 subunit ForD (78 aa).

4Fe-4S ferredoxin-type domains are found at residues 3–35 (FVAD…FKAS) and 37–66 (NSAW…HCIE). Residues Cys12, Cys17, Cys20, Cys24, Cys46, Cys49, Cys52, and Cys56 each contribute to the [4Fe-4S] cluster site.

As to quaternary structure, heterotetramer of one alpha, one beta, one delta and one gamma chain. The cofactor is [4Fe-4S] cluster.

This Aquifex aeolicus (strain VF5) protein is Ferredoxin oxidoreductase 2 subunit ForD (forD2).